Reading from the N-terminus, the 268-residue chain is Zinc transporter ZupT (268 aa).

Helical transmembrane passes span 6–26 (IIFA…GGVI), 37–57 (FLAG…FVEI), 73–93 (GGNW…AVID), 126–146 (VLTA…TFVA), 153–173 (IAIP…IAVA), 189–209 (WATL…ILLM), 211–231 (FLGP…MVFI), and 248–268 (TAIY…LLFI). Residues Asn-136 and Glu-139 each coordinate Fe(2+). Residues Glu-139 and His-164 each contribute to the Zn(2+) site. Positions 165, 168, and 197 each coordinate Fe(2+). Glu-168 provides a ligand contact to Zn(2+).

The protein belongs to the ZIP transporter (TC 2.A.5) family. ZupT subfamily.

Its subcellular location is the cell membrane. The enzyme catalyses Zn(2+)(in) = Zn(2+)(out). Mediates zinc uptake. May also transport other divalent cations. The sequence is that of Zinc transporter ZupT from Corynebacterium efficiens (strain DSM 44549 / YS-314 / AJ 12310 / JCM 11189 / NBRC 100395).